The primary structure comprises 215 residues: Vesicle-trafficking protein SEC22b-B (215 aa).

The Cytoplasmic segment spans residues 1-190; sequence MVLLTMIARL…RSDAKYLNTR (190 aa). The 114-residue stretch at 6 to 119 folds into the Longin domain; sequence MIARLADGLP…YSFIEFDTYI (114 aa). The region spanning 134-194 is the v-SNARE coiled-coil homology domain; that stretch reads NLSNINTELQ…KYLNTRSTYA (61 aa). A helical membrane pass occupies residues 191–213; sequence STYAKLAAGGVFFIMLIVYIRFW. Over 214–215 the chain is Lumenal; sequence WL.

It belongs to the synaptobrevin family. As to quaternary structure, component of 2 distinct SNARE complexes.

The protein resides in the endoplasmic reticulum membrane. Its subcellular location is the endoplasmic reticulum-Golgi intermediate compartment membrane. It is found in the golgi apparatus. The protein localises to the cis-Golgi network membrane. It localises to the trans-Golgi network membrane. The protein resides in the melanosome. Functionally, SNARE involved in targeting and fusion of ER-derived transport vesicles with the Golgi complex as well as Golgi-derived retrograde transport vesicles with the ER. The sequence is that of Vesicle-trafficking protein SEC22b-B from Danio rerio (Zebrafish).